A 212-amino-acid chain; its full sequence is Thymidylate kinase (212 aa).

Glycine 10 to threonine 17 is a binding site for ATP.

The protein belongs to the thymidylate kinase family.

The enzyme catalyses dTMP + ATP = dTDP + ADP. Functionally, phosphorylation of dTMP to form dTDP in both de novo and salvage pathways of dTTP synthesis. The protein is Thymidylate kinase of Prochlorococcus marinus (strain AS9601).